A 160-amino-acid polypeptide reads, in one-letter code: Ureidoglycolate lyase (160 aa).

This sequence belongs to the ureidoglycolate lyase family. In terms of assembly, homodimer. It depends on Ni(2+) as a cofactor.

It carries out the reaction (S)-ureidoglycolate = urea + glyoxylate. The protein operates within nitrogen metabolism; (S)-allantoin degradation. Catalyzes the catabolism of the allantoin degradation intermediate (S)-ureidoglycolate, generating urea and glyoxylate. Involved in the utilization of allantoin as nitrogen source. In Salmonella agona (strain SL483), this protein is Ureidoglycolate lyase.